A 297-amino-acid chain; its full sequence is NAD(P)-dependent methylenetetrahydromethanopterin dehydrogenase (297 aa).

The protein to M.extorquens MtdA. Homohexamer.

Its subcellular location is the cytoplasm. The catalysed reaction is 5,10-methylenetetrahydromethanopterin + NAD(+) = 5,10-methenyl-5,6,7,8-tetrahydromethanopterin + NADH. It carries out the reaction 5,10-methylenetetrahydromethanopterin + NADP(+) = 5,10-methenyl-5,6,7,8-tetrahydromethanopterin + NADPH. Its pathway is one-carbon metabolism; formaldehyde degradation; formate from formaldehyde (H(4)MPT route): step 2/5. In terms of biological role, catalyzes the dehydrogenation of methylene-H(4)MPT. This chain is NAD(P)-dependent methylenetetrahydromethanopterin dehydrogenase (mtdB), found in Methylorubrum extorquens (strain ATCC 14718 / DSM 1338 / JCM 2805 / NCIMB 9133 / AM1) (Methylobacterium extorquens).